Here is a 121-residue protein sequence, read N- to C-terminus: Small ribosomal subunit protein uS11 (121 aa).

The protein belongs to the universal ribosomal protein uS11 family. In terms of assembly, part of the 30S ribosomal subunit. Interacts with proteins S7 and S18. Binds to IF-3.

In terms of biological role, located on the platform of the 30S subunit, it bridges several disparate RNA helices of the 16S rRNA. Forms part of the Shine-Dalgarno cleft in the 70S ribosome. This Mycoplasma genitalium (strain ATCC 33530 / DSM 19775 / NCTC 10195 / G37) (Mycoplasmoides genitalium) protein is Small ribosomal subunit protein uS11.